Consider the following 494-residue polypeptide: Serine carboxypeptidase-like 21 (494 aa).

The N-terminal stretch at Met-1 to Ser-23 is a signal peptide. 2 N-linked (GlcNAc...) asparagine glycosylation sites follow: Asn-37 and Asn-69. 3 disulfide bridges follow: Cys-85–Cys-383, Cys-247–Cys-263, and Cys-286–Cys-350. Ser-179 is a catalytic residue. 2 N-linked (GlcNAc...) asparagine glycosylation sites follow: Asn-198 and Asn-248. A glycan (N-linked (GlcNAc...) asparagine) is linked at Asn-402. Asp-418 is an active-site residue. The N-linked (GlcNAc...) asparagine glycan is linked to Asn-460. Residue His-471 is part of the active site.

This sequence belongs to the peptidase S10 family. In terms of tissue distribution, expressed in flowers and siliques.

The protein resides in the secreted. In terms of biological role, probable carboxypeptidase. The protein is Serine carboxypeptidase-like 21 (SCPL21) of Arabidopsis thaliana (Mouse-ear cress).